An 80-amino-acid chain; its full sequence is Translation initiation factor IF-1, chloroplastic (80 aa).

The region spanning 1 to 72 (MKEHDLINME…TKGRILYRIR (72 aa)) is the S1-like domain.

This sequence belongs to the IF-1 family. In terms of assembly, component of the 30S ribosomal translation pre-initiation complex which assembles on the 30S ribosome in the order IF-2 and IF-3, IF-1 and N-formylmethionyl-tRNA(fMet); mRNA recruitment can occur at any time during PIC assembly.

The protein localises to the plastid. Its subcellular location is the chloroplast. In terms of biological role, one of the essential components for the initiation of protein synthesis. Stabilizes the binding of IF-2 and IF-3 on the 30S subunit to which N-formylmethionyl-tRNA(fMet) subsequently binds. Helps modulate mRNA selection, yielding the 30S pre-initiation complex (PIC). Upon addition of the 50S ribosomal subunit IF-1, IF-2 and IF-3 are released leaving the mature 70S translation initiation complex. This is Translation initiation factor IF-1, chloroplastic from Psilotum nudum (Whisk fern).